The sequence spans 556 residues: 2-succinyl-5-enolpyruvyl-6-hydroxy-3-cyclohexene-1-carboxylate synthase (556 aa).

Belongs to the TPP enzyme family. MenD subfamily. In terms of assembly, homodimer. Mg(2+) serves as cofactor. Requires Mn(2+) as cofactor. It depends on thiamine diphosphate as a cofactor.

The enzyme catalyses isochorismate + 2-oxoglutarate + H(+) = 5-enolpyruvoyl-6-hydroxy-2-succinyl-cyclohex-3-ene-1-carboxylate + CO2. The protein operates within quinol/quinone metabolism; 1,4-dihydroxy-2-naphthoate biosynthesis; 1,4-dihydroxy-2-naphthoate from chorismate: step 2/7. It participates in quinol/quinone metabolism; menaquinone biosynthesis. Functionally, catalyzes the thiamine diphosphate-dependent decarboxylation of 2-oxoglutarate and the subsequent addition of the resulting succinic semialdehyde-thiamine pyrophosphate anion to isochorismate to yield 2-succinyl-5-enolpyruvyl-6-hydroxy-3-cyclohexene-1-carboxylate (SEPHCHC). This Shigella flexneri serotype 5b (strain 8401) protein is 2-succinyl-5-enolpyruvyl-6-hydroxy-3-cyclohexene-1-carboxylate synthase.